The following is a 690-amino-acid chain: MSNELLLEIGTEEIPAAFLPKALQDMSSMIRKALTEARIPFGQVHTFGTPRRLCLAVADVAEKQEDQVIEKLGPARRVSFDADGNPTKAALGFAKSQGVDISEIGTMQTDKGEYICISRHISGKSTVSLLSEMLSRLITSLSFKKSMRWGNLDFRFARPIHWILALYGGEVIPFRIENIESGATSRGHRFMHPEAFPVSNLQEYLARTREHFVIVAPEERKRIILEEARKAAAAVSGRVLENEDLLETVTYLVEYPTIVCGSFDRKYLELPKEVLITSMMSHQKYFPVVDQEGRLLPFFITINNTLARDPAVVTRGNEKVIRARLSDAQFFFEEDQKIRLDDRVEGLQQVVFHTLLGTSYEKVQRFRKLAGWIADRIDPSLKNRVNRSALLAKADLDTQMVGEFSELQGIMGREYALLAGEDPTVARAIYEHYLPLTAGGDLPQTHEGAIVSIADKMDSIAGFFGVNLVPTGTADPYALRRQALGVINIILDKKYPLTLDDLVDECISILEEKLKRPAEETRKDVIEFFRGRLENMLISQGHPHDVVSAVLAAGFADLVQVIKKIEAMESFKAHPAYEPLAIAFKRAGNILKEFRNGRIDPALFSAAEENQLYSTLLEARARVVKALEKDDYPAALLELAALRQPIDHFFESVMVMVDEENIRFNRLSLLEALFSIFRRIADFSRIVTES.

Belongs to the class-II aminoacyl-tRNA synthetase family. Tetramer of two alpha and two beta subunits.

It localises to the cytoplasm. The enzyme catalyses tRNA(Gly) + glycine + ATP = glycyl-tRNA(Gly) + AMP + diphosphate. This is Glycine--tRNA ligase beta subunit from Syntrophus aciditrophicus (strain SB).